Reading from the N-terminus, the 86-residue chain is Small ribosomal subunit protein bS20 (86 aa).

Positions M1 to M22 are disordered.

This sequence belongs to the bacterial ribosomal protein bS20 family.

Functionally, binds directly to 16S ribosomal RNA. This chain is Small ribosomal subunit protein bS20, found in Thioalkalivibrio sulfidiphilus (strain HL-EbGR7).